A 319-amino-acid polypeptide reads, in one-letter code: MAATVAFSGVLRRAGWRLLQLRCLPVPRCRPALAPRAFRASAMQLRSLDQQKDQPPPSSSQQQSEAQGAEEPNPEALRSPPRYTDQGGEEEEDYESEEQLQHRILTAALEFVPTHGWTAEAIAEGAQSLGLSSAAASMFGDDGSELILHFVTQCNARLTHVLEEEQKLVQLGQAEKKKTDKFLRDAVETRLRMLIPYIQHWPRAFSILMLPHNIPPSLNLLTSMVDDMWHYAGDQSTDFNWYTRRAVLAGIYNTTELVMMQDSSPDFEDTWRFLENRISDAMNMGHTAKQVKSTGEALVQGLMGAAVTLKNLTGLNQRR.

The N-terminal 45 residues, 1–45 (MAATVAFSGVLRRAGWRLLQLRCLPVPRCRPALAPRAFRASAMQL), are a transit peptide targeting the mitochondrion. An SIFI-degron motif is present at residues 17 to 32 (RLLQLRCLPVPRCRPA). Residues 46–99 (RSLDQQKDQPPPSSSQQQSEAQGAEEPNPEALRSPPRYTDQGGEEEEDYESEEQ) form a disordered region. The span at 87-98 (GGEEEEDYESEE) shows a compositional bias: acidic residues. At Lys-176 the chain carries N6-acetyllysine. Arg-245 serves as a coordination point for a 1,2-diacylglycero-3-phosphoethanolamine.

It belongs to the COQ9 family. Homodimer. Heterodimer; two heterodimers of COQ7:COQ9 come together on the same side of the lipid pseudo-bilayer and form a curved tetramer with a hydrophobic surface suitable for membrane interaction. These two tetramers assemble into a soluble octamer with a pseudo-bilayer of lipids captured within. Interacts with COQ7; this interaction allows ubiquinone (CoQ) isoprene intermediates presentation to COQ7 and facilitates the COQ7-mediated hydroxylase step. Post-translationally, in response to mitochondrial stress, the precursor protein is ubiquitinated by the SIFI complex in the cytoplasm before mitochondrial import, leading to its degradation. Within the SIFI complex, UBR4 initiates ubiquitin chain that are further elongated or branched by KCMF1.

The protein localises to the mitochondrion. Its pathway is cofactor biosynthesis; ubiquinone biosynthesis. Membrane-associated protein that warps the membrane surface to access and bind aromatic isoprenes with high specificity, including ubiquinone (CoQ) isoprene intermediates and presents them directly to COQ7, therefore facilitating the COQ7-mediated hydroxylase step. Participates in the biosynthesis of coenzyme Q, also named ubiquinone, an essential lipid-soluble electron transporter for aerobic cellular respiration. The sequence is that of Ubiquinone biosynthesis protein COQ9, mitochondrial from Bos taurus (Bovine).